The sequence spans 640 residues: Fructose-1,6-bisphosphatase class 3 (640 aa).

Belongs to the FBPase class 3 family. Mn(2+) is required as a cofactor.

It carries out the reaction beta-D-fructose 1,6-bisphosphate + H2O = beta-D-fructose 6-phosphate + phosphate. The protein operates within carbohydrate biosynthesis; gluconeogenesis. This chain is Fructose-1,6-bisphosphatase class 3, found in Lactococcus lactis subsp. cremoris (strain MG1363).